The chain runs to 852 residues: Leucine--tRNA ligase (852 aa).

A 'HIGH' region motif is present at residues 51–61 (PYPSGDLHMGH). Residues 615 to 619 (KMSKS) carry the 'KMSKS' region motif. ATP is bound at residue lysine 618.

This sequence belongs to the class-I aminoacyl-tRNA synthetase family.

The protein resides in the cytoplasm. The catalysed reaction is tRNA(Leu) + L-leucine + ATP = L-leucyl-tRNA(Leu) + AMP + diphosphate. This Clavibacter sepedonicus (Clavibacter michiganensis subsp. sepedonicus) protein is Leucine--tRNA ligase.